The chain runs to 182 residues: ATP synthase subunit delta (182 aa).

It belongs to the ATPase delta chain family. As to quaternary structure, F-type ATPases have 2 components, F(1) - the catalytic core - and F(0) - the membrane proton channel. F(1) has five subunits: alpha(3), beta(3), gamma(1), delta(1), epsilon(1). CF(0) has four main subunits: a(1), b(1), b'(1) and c(10-14). The alpha and beta chains form an alternating ring which encloses part of the gamma chain. F(1) is attached to F(0) by a central stalk formed by the gamma and epsilon chains, while a peripheral stalk is formed by the delta, b and b' chains.

The protein localises to the cellular thylakoid membrane. Functionally, f(1)F(0) ATP synthase produces ATP from ADP in the presence of a proton or sodium gradient. F-type ATPases consist of two structural domains, F(1) containing the extramembraneous catalytic core and F(0) containing the membrane proton channel, linked together by a central stalk and a peripheral stalk. During catalysis, ATP synthesis in the catalytic domain of F(1) is coupled via a rotary mechanism of the central stalk subunits to proton translocation. In terms of biological role, this protein is part of the stalk that links CF(0) to CF(1). It either transmits conformational changes from CF(0) to CF(1) or is implicated in proton conduction. In Synechococcus sp. (strain JA-2-3B'a(2-13)) (Cyanobacteria bacterium Yellowstone B-Prime), this protein is ATP synthase subunit delta.